The following is a 106-amino-acid chain: UPF0145 protein AZOSEA16190 (106 aa).

This sequence belongs to the UPF0145 family.

The sequence is that of UPF0145 protein AZOSEA16190 from Aromatoleum aromaticum (strain DSM 19018 / LMG 30748 / EbN1) (Azoarcus sp. (strain EbN1)).